Reading from the N-terminus, the 384-residue chain is Protein V (384 aa).

2 disordered regions span residues Met1–Glu23 and Ser38–Gly317. Over residues Ile7–Gly20 the composition is skewed to basic and acidic residues. Positions Leu50–Gly59 are enriched in polar residues. The residue at position 68 (Ser68) is a Phosphoserine; by host. The span at Arg83–Ala101 shows a compositional bias: basic and acidic residues. Position 125 is a phosphoserine; by host (Ser125). A compositionally biased stretch (basic and acidic residues) spans Gly150 to Asp168. The span at Ala191–Ala206 shows a compositional bias: polar residues. 4 positions are modified to phosphoserine; by host: Ser192, Ser249, Ser257, and Ser260. His318, Cys337, Cys341, Cys353, Cys355, Cys358, Cys362, and Cys365 together coordinate Zn(2+).

This sequence belongs to the paramyxoviruses V protein family. Interacts with host IFIH1/MDA5 and DHX58/LGP2. Interacts with host IRF3. Interacts with host RIGI regulatory protein (via CARDs domain) and host TRIM25 (via SPRY domain); these interactions prevent TRIM25-mediated ubiquitination of RIG-I and disrupts downstream RIG-I signaling.

It localises to the host cytoplasm. In terms of biological role, plays an essential role in the inhibition of host immune response. Prevents the establishment of cellular antiviral state by blocking interferon-alpha/beta (IFN-alpha/beta) production and signaling pathway. Interacts with host IFIH1/MDA5 and DHX58/LGP2 to inhibit the transduction pathway involved in the activation of IFN-beta promoter, thus protecting the virus against cell antiviral state. Also interacts with and inhibits host IRF3. Blocks the type I interferon signaling pathway by disrupting the RIG-I signaling pathway. This Sendai virus (strain Z) (SeV) protein is Protein V (P/V/C).